The following is a 321-amino-acid chain: Gap junction delta-2 protein (321 aa).

The Cytoplasmic segment spans residues 1–19; sequence MGEWTILERLLEAAVQQHS. The chain crosses the membrane as a helical span at residues 20 to 42; the sequence is TMIGRILLTVVVIFRILIVAIVG. Over 43–75 the chain is Extracellular; that stretch reads ETVYDDEQTMFVCNTLQPGCNQACYDRAFPISH. Residues 76 to 98 traverse the membrane as a helical segment; it reads IRYWVFQIIMVCTPSLCFITYSV. The Cytoplasmic segment spans residues 99–197; the sequence is HQSAKQRERR…KLRRQEGISR (99 aa). Residues 120–141 form a disordered region; sequence PAESIGGPGGTGGGGSGGSKRE. Over residues 125 to 137 the composition is skewed to gly residues; that stretch reads GGPGGTGGGGSGG. A helical transmembrane segment spans residues 198-220; the sequence is FYIIQVVFRNALEIGFLVGQYFL. The Extracellular portion of the chain corresponds to 221 to 252; it reads YGFSVPGLYECNRYPCIKEVECYVSRPTEKTV. Residues 253 to 275 traverse the membrane as a helical segment; sequence FLVFMFAVSGICVVLNLAELNHL. The Cytoplasmic portion of the chain corresponds to 276–321; sequence GWRKIKLAVRGAQAKRKSVYEIRNKDLPRVSVPNFGRTQSSDSAYV.

The protein belongs to the connexin family. Delta-type subfamily. A connexon is composed of a hexamer of connexins. As to expression, highly expressed in neurons.

It localises to the cell membrane. It is found in the cell junction. Its subcellular location is the gap junction. One gap junction consists of a cluster of closely packed pairs of transmembrane channels, the connexons, through which materials of low MW diffuse from one cell to a neighboring cell. The protein is Gap junction delta-2 protein (Gjd2) of Rattus norvegicus (Rat).